A 318-amino-acid chain; its full sequence is Ribosomal RNA small subunit methyltransferase H (318 aa).

Residues 34 to 36 (GGH), Asp57, Leu91, Asp110, and Gln117 contribute to the S-adenosyl-L-methionine site.

It belongs to the methyltransferase superfamily. RsmH family.

It localises to the cytoplasm. The catalysed reaction is cytidine(1402) in 16S rRNA + S-adenosyl-L-methionine = N(4)-methylcytidine(1402) in 16S rRNA + S-adenosyl-L-homocysteine + H(+). Its function is as follows. Specifically methylates the N4 position of cytidine in position 1402 (C1402) of 16S rRNA. This is Ribosomal RNA small subunit methyltransferase H from Chlorobaculum parvum (strain DSM 263 / NCIMB 8327) (Chlorobium vibrioforme subsp. thiosulfatophilum).